Reading from the N-terminus, the 299-residue chain is Phosphoribosylaminoimidazole-succinocarboxamide synthase (299 aa).

Residues 259-279 are disordered; the sequence is PESGWDRKSEQPPPPLPQHVV.

It belongs to the SAICAR synthetase family.

The catalysed reaction is 5-amino-1-(5-phospho-D-ribosyl)imidazole-4-carboxylate + L-aspartate + ATP = (2S)-2-[5-amino-1-(5-phospho-beta-D-ribosyl)imidazole-4-carboxamido]succinate + ADP + phosphate + 2 H(+). It participates in purine metabolism; IMP biosynthesis via de novo pathway; 5-amino-1-(5-phospho-D-ribosyl)imidazole-4-carboxamide from 5-amino-1-(5-phospho-D-ribosyl)imidazole-4-carboxylate: step 1/2. In Streptomyces avermitilis (strain ATCC 31267 / DSM 46492 / JCM 5070 / NBRC 14893 / NCIMB 12804 / NRRL 8165 / MA-4680), this protein is Phosphoribosylaminoimidazole-succinocarboxamide synthase.